The primary structure comprises 354 residues: Guanine nucleotide-binding protein G(i) subunit alpha-1 (354 aa).

Gly-2 carries N-myristoyl glycine lipidation. Cys-3 is lipidated: S-palmitoyl cysteine. The G-alpha domain maps to 32–354 (REVKLLLLGA…KNNLKDCGLF (323 aa)). The interval 35 to 48 (KLLLLGAGESGKST) is G1 motif. GTP contacts are provided by residues 43–48 (ESGKST), 150–151 (DS), and 175–178 (LRTR). Ser-47 contributes to the Mg(2+) binding site. Residues 173 to 181 (DVLRTRVKT) form a G2 motif region. Residue Thr-181 coordinates Mg(2+). The interval 196 to 205 (FKMFDVGGQR) is G3 motif. GTP contacts are provided by residues 200 to 204 (DVGGQ), 269 to 272 (NKKD), and Ala-326. Residues 265–272 (ILFLNKKD) are G4 motif. Positions 324–329 (TCATDT) are G5 motif.

This sequence belongs to the G-alpha family. G(i/o/t/z) subfamily. In terms of assembly, heterotrimeric G proteins are composed of 3 units; alpha, beta and gamma. The alpha chain contains the guanine nucleotide binding site. Part of a spindle orientation complex at least composed of GNAI1, GPSM2 and NUMA1. Identified in complex with the beta subunit GNB1 and the gamma subunit GNG1. Identified in complex with the beta subunit GNB1 and the gamma subunit GNG2. Component of the TAS2R14-GNAI1 complex, consisting of TAS2R14, GNAI1, GNB1 and GNG2; within the complex interacts with TAS2R14; this complex plays a role in the perception of bitterness. GTP binding causes dissociation of the heterotrimer, liberating the individual subunits so that they can interact with downstream effector proteins. Interacts (GDP-bound form) with GPSM1; this inhibits guanine nucleotide exchange and GTP binding. Interacts (GDP-bound form) with GPSM2 (via GoLoco domains); this inhibits guanine nucleotide exchange. Interacts with RGS10; this strongly enhances GTP hydrolysis. Interacts with RGS1 and RGS16; this strongly enhances GTPase activity. Interacts with RGS4. Interacts with RGS12. Interacts (via active GTP- or inactive GDP-bound forms) with RGS14 (via RGS and GoLoco domains). Interacts with RGS3, RGS6, RGS7, RGS8, RGS17, RGS18 and RGS20 (in vitro). Interacts (GDP-bound form) with RIC8A (via C-terminus); promoting GNAI1 folding and association with the plasma membrane. Interacts (inactive GDP-bound form) with NUCB1 (via GBA motif); the interaction leads to activation of GNAI1. Interacts (inactive GDP-bound form) with CCDC88C/DAPLE (via GBA motif); the interaction leads to activation of GNAI1. Interacts (inactive GDP-bound form) with CCDC8A/GIV (via GBA motif). Myristoylation at Gly-2 is required for membrane anchoring before palmitoylation. In terms of processing, palmitoylation at Cys-3 varies with membrane lipid composition. Mainly expressed in the brain, lung and kidney.

It localises to the nucleus. The protein localises to the cytoplasm. Its subcellular location is the cell membrane. The protein resides in the cytoskeleton. It is found in the microtubule organizing center. It localises to the centrosome. The protein localises to the cell cortex. Its subcellular location is the membrane. It catalyses the reaction GTP + H2O = GDP + phosphate + H(+). In terms of biological role, guanine nucleotide-binding proteins (G proteins) function as transducers downstream of G protein-coupled receptors (GPCRs) in numerous signaling cascades. The alpha chain contains the guanine nucleotide binding site and alternates between an active, GTP-bound state and an inactive, GDP-bound state. Signaling by an activated GPCR promotes GDP release and GTP binding. The alpha subunit has a low GTPase activity that converts bound GTP to GDP, thereby terminating the signal. Both GDP release and GTP hydrolysis are modulated by numerous regulatory proteins. Signaling is mediated via effector proteins, such as adenylate cyclase. Inhibits adenylate cyclase activity of ADCY1, ADCY5 and ADCY6, leading to decreased intracellular cAMP levels. The inactive GDP-bound form prevents the association of RGS14 with centrosomes and is required for the translocation of RGS14 from the cytoplasm to the plasma membrane. Required for normal cytokinesis during mitosis. Required for cortical dynein-dynactin complex recruitment during metaphase. The chain is Guanine nucleotide-binding protein G(i) subunit alpha-1 (GNAI1) from Cavia porcellus (Guinea pig).